The chain runs to 370 residues: F-box protein At3g20690 (370 aa).

Positions 1–45 constitute an F-box domain; that stretch reads MMMSDLPHDLVEEILSRLPLISLKAMRSTCKTWNVLSKHRSFANK.

In Arabidopsis thaliana (Mouse-ear cress), this protein is F-box protein At3g20690.